A 261-amino-acid polypeptide reads, in one-letter code: Thiazole synthase (261 aa).

The active-site Schiff-base intermediate with DXP is Lys102. 1-deoxy-D-xylulose 5-phosphate-binding positions include Gly163, 189–190, and 211–212; these read AG and NT.

The protein belongs to the ThiG family. As to quaternary structure, homotetramer. Forms heterodimers with either ThiH or ThiS.

It is found in the cytoplasm. It catalyses the reaction [ThiS sulfur-carrier protein]-C-terminal-Gly-aminoethanethioate + 2-iminoacetate + 1-deoxy-D-xylulose 5-phosphate = [ThiS sulfur-carrier protein]-C-terminal Gly-Gly + 2-[(2R,5Z)-2-carboxy-4-methylthiazol-5(2H)-ylidene]ethyl phosphate + 2 H2O + H(+). It functions in the pathway cofactor biosynthesis; thiamine diphosphate biosynthesis. Its function is as follows. Catalyzes the rearrangement of 1-deoxy-D-xylulose 5-phosphate (DXP) to produce the thiazole phosphate moiety of thiamine. Sulfur is provided by the thiocarboxylate moiety of the carrier protein ThiS. In vitro, sulfur can be provided by H(2)S. This is Thiazole synthase from Acinetobacter baumannii (strain AB307-0294).